The primary structure comprises 76 residues: MMRKWLKKNRLEKGFTQEEVAKAAQIGRAYYTMIENGTRKPSVIVSKKIGEKLGFDWTIFFEDVCNETKHNSKDSA.

In terms of domain architecture, HTH cro/C1-type spans 6-60; that stretch reads LKKNRLEKGFTQEEVAKAAQIGRAYYTMIENGTRKPSVIVSKKIGEKLGFDWTIF. The segment at residues 17 to 36 is a DNA-binding region (H-T-H motif); the sequence is QEEVAKAAQIGRAYYTMIEN.

This is an uncharacterized protein from Bacillus subtilis (strain 168).